Reading from the N-terminus, the 456-residue chain is Ribulose bisphosphate carboxylase large chain (456 aa).

Lys-7 carries the N6,N6,N6-trimethyllysine modification. Substrate-binding residues include Asn-116 and Thr-166. Residue Lys-168 is the Proton acceptor of the active site. Lys-170 is a binding site for substrate. Mg(2+)-binding residues include Lys-194, Asp-196, and Glu-197. N6-carboxylysine is present on Lys-194. His-287 functions as the Proton acceptor in the catalytic mechanism. The substrate site is built by Arg-288, His-320, and Ser-372.

Belongs to the RuBisCO large chain family. Type I subfamily. As to quaternary structure, heterohexadecamer of 8 large chains and 8 small chains; disulfide-linked. The disulfide link is formed within the large subunit homodimers. Mg(2+) is required as a cofactor. The disulfide bond which can form in the large chain dimeric partners within the hexadecamer appears to be associated with oxidative stress and protein turnover.

It localises to the plastid. The protein localises to the chloroplast. The enzyme catalyses 2 (2R)-3-phosphoglycerate + 2 H(+) = D-ribulose 1,5-bisphosphate + CO2 + H2O. The catalysed reaction is D-ribulose 1,5-bisphosphate + O2 = 2-phosphoglycolate + (2R)-3-phosphoglycerate + 2 H(+). Its function is as follows. RuBisCO catalyzes two reactions: the carboxylation of D-ribulose 1,5-bisphosphate, the primary event in carbon dioxide fixation, as well as the oxidative fragmentation of the pentose substrate in the photorespiration process. Both reactions occur simultaneously and in competition at the same active site. This chain is Ribulose bisphosphate carboxylase large chain, found in Barnardia japonica (Chinese squill).